The primary structure comprises 451 residues: MGRRYFGTDGIRGTVGDTPITPDFVLRLGYAAGKVLAGAADGATGARPTVLIGKDTRVSGYMLEAALEAGFSAAGVDVMLAGPMPTPGVAYLTRALRLSAGVVISASHNPYQDNGIKFFSADGNKLPDETEAEIEAWLDKPLECASSDRLGKARRLDDAAGRYIEFCKSTFPAAYDLRGLKLVIDCAHGAAYQIAPHVFHELGADVIPIGVAPNGFNINDGVGATAPDALVRAVRANHADLGIALDGDADRLQVVDSSGRLFNGDELLYVLVKDRIATAGKVEGAVGTLMTNLAVEVALQREGVEFVRAAVGDRYVLEQLRERGWQLGAEGSGHILSLDRHSTGDGIVSALLVLAALKRSGRTLAQMLDGVTLFPQKLINVRMKPGADWKGSASIRAAIDAAESALAGHGRVLIRASGTEPVLRVMVEAQQAADATRHAEAIADAVREATS.

Catalysis depends on Ser-107, which acts as the Phosphoserine intermediate. Mg(2+) contacts are provided by Ser-107, Asp-246, Asp-248, and Asp-250. Residue Ser-107 is modified to Phosphoserine.

This sequence belongs to the phosphohexose mutase family. Requires Mg(2+) as cofactor. Post-translationally, activated by phosphorylation.

It carries out the reaction alpha-D-glucosamine 1-phosphate = D-glucosamine 6-phosphate. Catalyzes the conversion of glucosamine-6-phosphate to glucosamine-1-phosphate. The polypeptide is Phosphoglucosamine mutase (Burkholderia vietnamiensis (strain G4 / LMG 22486) (Burkholderia cepacia (strain R1808))).